A 275-amino-acid chain; its full sequence is Type III pantothenate kinase (275 aa).

ATP is bound at residue 9 to 16; the sequence is DIGNTRLK. Substrate is bound by residues Tyr114 and 121–124; that span reads GVDR. The active-site Proton acceptor is the Asp123. Position 147 (Thr147) interacts with ATP. Thr209 lines the substrate pocket.

This sequence belongs to the type III pantothenate kinase family. Homodimer. It depends on NH4(+) as a cofactor. Requires K(+) as cofactor.

Its subcellular location is the cytoplasm. It carries out the reaction (R)-pantothenate + ATP = (R)-4'-phosphopantothenate + ADP + H(+). It functions in the pathway cofactor biosynthesis; coenzyme A biosynthesis; CoA from (R)-pantothenate: step 1/5. Catalyzes the phosphorylation of pantothenate (Pan), the first step in CoA biosynthesis. This Cupriavidus pinatubonensis (strain JMP 134 / LMG 1197) (Cupriavidus necator (strain JMP 134)) protein is Type III pantothenate kinase.